Reading from the N-terminus, the 431-residue chain is Trigger factor (431 aa).

The region spanning 163-248 (GDTAVLDFEG…IHDVKRKELP (86 aa)) is the PPIase FKBP-type domain.

The protein belongs to the FKBP-type PPIase family. Tig subfamily.

It is found in the cytoplasm. The enzyme catalyses [protein]-peptidylproline (omega=180) = [protein]-peptidylproline (omega=0). Its function is as follows. Involved in protein export. Acts as a chaperone by maintaining the newly synthesized protein in an open conformation. Functions as a peptidyl-prolyl cis-trans isomerase. The sequence is that of Trigger factor (tig) from Halalkalibacterium halodurans (strain ATCC BAA-125 / DSM 18197 / FERM 7344 / JCM 9153 / C-125) (Bacillus halodurans).